The primary structure comprises 154 residues: CASP-like protein 5C2 (154 aa).

Over 1 to 17 (MEHVPGSFGTSASFALR) the chain is Cytoplasmic. Residues 18–38 (FGQTIFSAASLIFMCFDFDFY) traverse the membrane as a helical segment. The Extracellular portion of the chain corresponds to 39 to 41 (DFT). The helical transmembrane segment at 42–62 (TFCYLAMVMAIVTPWSILLAL) threads the bilayer. The Cytoplasmic portion of the chain corresponds to 63–81 (TDTYSVLVKLLPQELRVLS). Residues 82-102 (IVFAGDFVLSFLSLGGACAVA) form a helical membrane-spanning segment. Topologically, residues 103–128 (SATELLASADGKICDGSLCIQYQVSA) are extracellular. The chain crosses the membrane as a helical span at residues 129–149 (ALAFLCWFLLLASALFNFWSL). Over 150–154 (PSLYY) the chain is Cytoplasmic.

It belongs to the Casparian strip membrane proteins (CASP) family. In terms of assembly, homodimer and heterodimers.

The protein resides in the cell membrane. This chain is CASP-like protein 5C2, found in Arabidopsis thaliana (Mouse-ear cress).